Consider the following 291-residue polypeptide: 5'-3' exonuclease (291 aa).

In terms of domain architecture, 5'-3' exonuclease spans 176–269 (APYQVVEYKG…DLTGLKPIQK (94 aa)).

In terms of biological role, 5'-3' exonuclease acting preferentially on double-stranded DNA. The chain is 5'-3' exonuclease (polA) from Mycoplasma genitalium (strain ATCC 33530 / DSM 19775 / NCTC 10195 / G37) (Mycoplasmoides genitalium).